The following is a 194-amino-acid chain: Inner membrane-spanning protein YciB (194 aa).

5 helical membrane passes run 1-21 (MKLL…KTTN), 49-69 (EKMH…TILF), 77-97 (WKPS…GWVS), 120-140 (LNYS…YVAY), and 150-170 (FKLF…GVYI).

This sequence belongs to the YciB family.

It localises to the cell inner membrane. In terms of biological role, plays a role in cell envelope biogenesis, maintenance of cell envelope integrity and membrane homeostasis. In Hahella chejuensis (strain KCTC 2396), this protein is Inner membrane-spanning protein YciB.